A 254-amino-acid polypeptide reads, in one-letter code: Alcohol dehydrogenase (254 aa).

10 to 33 (FVAGLGGIGLDTSRELVKRDLKNL) contributes to the NAD(+) binding site. Substrate is bound at residue Ser-138. Tyr-151 functions as the Proton acceptor in the catalytic mechanism.

Belongs to the short-chain dehydrogenases/reductases (SDR) family. As to quaternary structure, homodimer.

It carries out the reaction a primary alcohol + NAD(+) = an aldehyde + NADH + H(+). The enzyme catalyses a secondary alcohol + NAD(+) = a ketone + NADH + H(+). The protein is Alcohol dehydrogenase (Adh) of Drosophila madeirensis (Fruit fly).